We begin with the raw amino-acid sequence, 71 residues long: Large ribosomal subunit protein bL31 (71 aa).

Zn(2+) contacts are provided by cysteine 16, cysteine 18, cysteine 37, and cysteine 40.

The protein belongs to the bacterial ribosomal protein bL31 family. Type A subfamily. As to quaternary structure, part of the 50S ribosomal subunit. Zn(2+) is required as a cofactor.

Its function is as follows. Binds the 23S rRNA. The chain is Large ribosomal subunit protein bL31 from Marinomonas sp. (strain MWYL1).